We begin with the raw amino-acid sequence, 193 residues long: Probable chemoreceptor glutamine deamidase CheD 1 (193 aa).

Residues 1–26 form a disordered region; the sequence is MPHTPPAYPAASADHRPPSSPPAEPA.

Belongs to the CheD family.

The catalysed reaction is L-glutaminyl-[protein] + H2O = L-glutamyl-[protein] + NH4(+). Functionally, probably deamidates glutamine residues to glutamate on methyl-accepting chemotaxis receptors (MCPs), playing an important role in chemotaxis. In Chromobacterium violaceum (strain ATCC 12472 / DSM 30191 / JCM 1249 / CCUG 213 / NBRC 12614 / NCIMB 9131 / NCTC 9757 / MK), this protein is Probable chemoreceptor glutamine deamidase CheD 1.